A 1245-amino-acid chain; its full sequence is ATP-dependent helicase/deoxyribonuclease subunit B (1245 aa).

Positions Trp737 to Glu758 are disordered. Residues Leu748–Glu758 show a composition bias toward basic and acidic residues.

This sequence belongs to the helicase family. AddB/RexB type 2 subfamily. In terms of assembly, heterodimer of AddA and RexB. Mg(2+) is required as a cofactor.

Functionally, the heterodimer acts as both an ATP-dependent DNA helicase and an ATP-dependent, dual-direction single-stranded exonuclease. Recognizes the chi site generating a DNA molecule suitable for the initiation of homologous recombination. This subunit has 5' -&gt; 3' nuclease activity but not helicase activity. In Limosilactobacillus fermentum (strain NBRC 3956 / LMG 18251) (Lactobacillus fermentum), this protein is ATP-dependent helicase/deoxyribonuclease subunit B.